The chain runs to 660 residues: Probable beta-hexosaminidase fdl (660 aa).

A signal peptide spans 1-36 (MSLAVSLRRALLVLLTGAIFILTVLYWNQGVTKAQA). N-linked (GlcNAc...) asparagine glycans are attached at residues N210, N412, and N452.

Belongs to the glycosyl hydrolase 20 family. In terms of tissue distribution, in third instar larval and early pupal brains, expressed in cells sending projections across the interhemispheric junction. In adult brain, expressed in mushroom body, ellipsoid body and pars intercerebralis.

It catalyses the reaction Hydrolysis of terminal non-reducing N-acetyl-D-hexosamine residues in N-acetyl-beta-D-hexosaminides.. Involved in brain restructurization via hormonal control during metamorphosis. Implicated in N-glycan processing. The protein is Probable beta-hexosaminidase fdl (fdl) of Drosophila melanogaster (Fruit fly).